A 101-amino-acid polypeptide reads, in one-letter code: Small ribosomal subunit protein uS14 (101 aa).

Residues 51-72 (LPRDSSPSRQRNPCRQTGRPHG) are disordered. Positions 52–65 (PRDSSPSRQRNPCR) are enriched in polar residues.

The protein belongs to the universal ribosomal protein uS14 family. As to quaternary structure, part of the 30S ribosomal subunit. Contacts proteins S3 and S10.

In terms of biological role, binds 16S rRNA, required for the assembly of 30S particles and may also be responsible for determining the conformation of the 16S rRNA at the A site. The protein is Small ribosomal subunit protein uS14 of Buchnera aphidicola subsp. Acyrthosiphon kondoi (Acyrthosiphon kondoi symbiotic bacterium).